The primary structure comprises 307 residues: 4-hydroxy-3-methylbut-2-enyl diphosphate reductase (307 aa).

Position 13 (C13) interacts with [4Fe-4S] cluster. Positions 42 and 75 each coordinate (2E)-4-hydroxy-3-methylbut-2-enyl diphosphate. Residues H42 and H75 each coordinate dimethylallyl diphosphate. 2 residues coordinate isopentenyl diphosphate: H42 and H75. C97 contributes to the [4Fe-4S] cluster binding site. Position 125 (H125) interacts with (2E)-4-hydroxy-3-methylbut-2-enyl diphosphate. Residue H125 coordinates dimethylallyl diphosphate. Isopentenyl diphosphate is bound at residue H125. Residue E127 is the Proton donor of the active site. T165 is a (2E)-4-hydroxy-3-methylbut-2-enyl diphosphate binding site. Residue C195 participates in [4Fe-4S] cluster binding. The (2E)-4-hydroxy-3-methylbut-2-enyl diphosphate site is built by S223, S224, N225, and S267. Positions 223, 224, 225, and 267 each coordinate dimethylallyl diphosphate. S223, S224, N225, and S267 together coordinate isopentenyl diphosphate.

It belongs to the IspH family. It depends on [4Fe-4S] cluster as a cofactor.

The enzyme catalyses isopentenyl diphosphate + 2 oxidized [2Fe-2S]-[ferredoxin] + H2O = (2E)-4-hydroxy-3-methylbut-2-enyl diphosphate + 2 reduced [2Fe-2S]-[ferredoxin] + 2 H(+). It carries out the reaction dimethylallyl diphosphate + 2 oxidized [2Fe-2S]-[ferredoxin] + H2O = (2E)-4-hydroxy-3-methylbut-2-enyl diphosphate + 2 reduced [2Fe-2S]-[ferredoxin] + 2 H(+). Its pathway is isoprenoid biosynthesis; dimethylallyl diphosphate biosynthesis; dimethylallyl diphosphate from (2E)-4-hydroxy-3-methylbutenyl diphosphate: step 1/1. The protein operates within isoprenoid biosynthesis; isopentenyl diphosphate biosynthesis via DXP pathway; isopentenyl diphosphate from 1-deoxy-D-xylulose 5-phosphate: step 6/6. In terms of biological role, catalyzes the conversion of 1-hydroxy-2-methyl-2-(E)-butenyl 4-diphosphate (HMBPP) into a mixture of isopentenyl diphosphate (IPP) and dimethylallyl diphosphate (DMAPP). Acts in the terminal step of the DOXP/MEP pathway for isoprenoid precursor biosynthesis. The protein is 4-hydroxy-3-methylbut-2-enyl diphosphate reductase of Chlamydia trachomatis serovar L2 (strain ATCC VR-902B / DSM 19102 / 434/Bu).